A 301-amino-acid polypeptide reads, in one-letter code: Glucose-1-phosphate adenylyltransferase large subunit (301 aa).

The protein belongs to the bacterial/plant glucose-1-phosphate adenylyltransferase family. As to quaternary structure, heterotetramer.

It is found in the plastid. The protein resides in the chloroplast. It localises to the amyloplast. It carries out the reaction alpha-D-glucose 1-phosphate + ATP + H(+) = ADP-alpha-D-glucose + diphosphate. It functions in the pathway glycan biosynthesis; starch biosynthesis. Insensitive to 3'phosphoglycerate and orthophosphate. Its function is as follows. This protein plays a role in synthesis of starch. It catalyzes the synthesis of the activated glycosyl donor, ADP-glucose from Glc-1-P and ATP. This Triticum aestivum (Wheat) protein is Glucose-1-phosphate adenylyltransferase large subunit (AGA.1).